The following is a 259-amino-acid chain: Ribonuclease T2-B (259 aa).

The first 29 residues, 1 to 29, serve as a signal peptide directing secretion; that stretch reads MAPAEARGALPGWISVLGWGLALCSLCGA. The cysteines at positions 53 and 59 are disulfide-linked. His69 is a catalytic residue. 3 cysteine pairs are disulfide-bonded: Cys79/Cys125, Cys188/Cys244, and Cys206/Cys217. N-linked (GlcNAc...) asparagine glycosylation is found at Asn80 and Asn110. Active-site residues include Glu118 and His122. N-linked (GlcNAc...) asparagine glycosylation is present at Asn216.

It belongs to the RNase T2 family.

The protein localises to the secreted. It is found in the lysosome lumen. Its subcellular location is the endoplasmic reticulum lumen. It localises to the mitochondrion intermembrane space. The catalysed reaction is a ribonucleotidyl-ribonucleotide-RNA + H2O = a 3'-end 3'-phospho-ribonucleotide-RNA + a 5'-end dephospho-ribonucleoside-RNA + H(+). The enzyme catalyses an adenylyl-uridine-RNA = a 3'-end 2',3'-cyclophospho-AMP-RNA + a 5'-end dephospho-uridine-RNA. It carries out the reaction a guanylyl-uridine-RNA = a 3'-end 2',3'-cyclophospho-GMP-RNA + a 5'-end dephospho-uridine-RNA. With respect to regulation, inhibited by Zn(2+) and Cu(2+). Ribonuclease that plays an essential role in innate immune response by recognizing and degrading RNAs from microbial pathogens that are subsequently sensed by TLR8. Cleaves preferentially single-stranded RNA molecules between purine and uridine residues, which critically contributes to the supply of catabolic uridine and the generation of purine-2',3'-cyclophosphate-terminated oligoribonucleotides. In turn, RNase T2 degradation products promote the RNA-dependent activation of TLR8. In plasmacytoid dendritic cells, it cooperates with PLD3 or PLD4 5'-&gt;3' exonucleases to process RNA fragments and release 2',3'-cyclic guanosine monophosphate (2',3'-cGMP), a potent stimulatory ligand for TLR7. Also plays a key role in degradation of mitochondrial RNA and processing of non-coding RNA imported from the cytosol into mitochondria. Participates as well in degradation of mitochondrion-associated cytosolic rRNAs. In Mus musculus (Mouse), this protein is Ribonuclease T2-B.